The primary structure comprises 492 residues: Glutamyl-tRNA(Gln) amidotransferase subunit A (492 aa).

Residues K78 and S158 each act as charge relay system in the active site. S182 acts as the Acyl-ester intermediate in catalysis.

Belongs to the amidase family. GatA subfamily. Heterotrimer of A, B and C subunits.

It carries out the reaction L-glutamyl-tRNA(Gln) + L-glutamine + ATP + H2O = L-glutaminyl-tRNA(Gln) + L-glutamate + ADP + phosphate + H(+). Its function is as follows. Allows the formation of correctly charged Gln-tRNA(Gln) through the transamidation of misacylated Glu-tRNA(Gln) in organisms which lack glutaminyl-tRNA synthetase. The reaction takes place in the presence of glutamine and ATP through an activated gamma-phospho-Glu-tRNA(Gln). The polypeptide is Glutamyl-tRNA(Gln) amidotransferase subunit A (Rhodopseudomonas palustris (strain ATCC BAA-98 / CGA009)).